Here is a 107-residue protein sequence, read N- to C-terminus: Putative double-stranded DNA mimic protein HI_1450 (107 aa).

This sequence belongs to the putative dsDNA mimic protein family. As to quaternary structure, monomer in solution. Interacts with the DNA-binding protein HU.

Its function is as follows. May act as a double-stranded DNA (dsDNA) mimic. Probably regulates the activity of the DNA-binding protein HU. This Haemophilus influenzae (strain ATCC 51907 / DSM 11121 / KW20 / Rd) protein is Putative double-stranded DNA mimic protein HI_1450.